The chain runs to 260 residues: Thiamine thiazole synthase (260 aa).

Residues Ala36, 55-56 (EQ), Gly63, and 154-156 (HVD) each bind NAD(+). Positions 156 and 171 each coordinate Fe cation. Met224 contacts NAD(+). Arg234 contributes to the glycine binding site.

It belongs to the THI4 family. As to quaternary structure, homooctamer; tetramer of dimers. It depends on Fe(2+) as a cofactor.

The catalysed reaction is hydrogen sulfide + glycine + NAD(+) = ADP-5-ethyl-4-methylthiazole-2-carboxylate + nicotinamide + 3 H2O + H(+). The protein operates within cofactor biosynthesis; thiamine diphosphate biosynthesis. Involved in the biosynthesis of the thiazole moiety of thiamine. Catalyzes the conversion of NAD and glycine to adenosine diphosphate 5-(2-hydroxyethyl)-4-methylthiazole-2-carboxylate (ADT), an adenylated thiazole intermediate, using free sulfide as a source of sulfur. The chain is Thiamine thiazole synthase from Methanosarcina mazei (strain ATCC BAA-159 / DSM 3647 / Goe1 / Go1 / JCM 11833 / OCM 88) (Methanosarcina frisia).